The chain runs to 98 residues: Integration host factor subunit alpha (98 aa).

The interval 49 to 71 is disordered; the sequence is FGNFDLRDKNQRPGRNPKTGEDI.

Belongs to the bacterial histone-like protein family. As to quaternary structure, heterodimer of an alpha and a beta chain.

Its function is as follows. This protein is one of the two subunits of integration host factor, a specific DNA-binding protein that functions in genetic recombination as well as in transcriptional and translational control. The chain is Integration host factor subunit alpha from Shewanella sp. (strain ANA-3).